The sequence spans 480 residues: tRNA-2-methylthio-N(6)-dimethylallyladenosine synthase (480 aa).

Positions 29 to 145 constitute an MTTase N-terminal domain; that stretch reads GSFWIQTFGC…LEALLTQVDN (117 aa). C38, C74, C108, C180, C184, and C187 together coordinate [4Fe-4S] cluster. One can recognise a Radical SAM core domain in the interval 166–403; the sequence is RDSTICAWVN…NALVERVALQ (238 aa). The region spanning 406 to 474 is the TRAM domain; it reads SRYSGKVEQV…AFSLSGTPCD (69 aa).

It belongs to the methylthiotransferase family. MiaB subfamily. As to quaternary structure, monomer. [4Fe-4S] cluster serves as cofactor.

Its subcellular location is the cytoplasm. It catalyses the reaction N(6)-dimethylallyladenosine(37) in tRNA + (sulfur carrier)-SH + AH2 + 2 S-adenosyl-L-methionine = 2-methylsulfanyl-N(6)-dimethylallyladenosine(37) in tRNA + (sulfur carrier)-H + 5'-deoxyadenosine + L-methionine + A + S-adenosyl-L-homocysteine + 2 H(+). Catalyzes the methylthiolation of N6-(dimethylallyl)adenosine (i(6)A), leading to the formation of 2-methylthio-N6-(dimethylallyl)adenosine (ms(2)i(6)A) at position 37 in tRNAs that read codons beginning with uridine. The sequence is that of tRNA-2-methylthio-N(6)-dimethylallyladenosine synthase from Prochlorococcus marinus (strain MIT 9303).